The sequence spans 114 residues: Small ribosomal subunit protein uS13m (114 aa).

The tract at residues 92–114 is disordered; the sequence is DGLPLRGQRSHTNARTSRKRIRK.

The protein belongs to the universal ribosomal protein uS13 family. In terms of assembly, part of the small ribosomal subunit.

The protein resides in the mitochondrion. Functionally, located at the top of the head of the small subunit, it contacts several helices of the 18S rRNA. This is Small ribosomal subunit protein uS13m (RPS13) from Oenothera berteroana (Bertero's evening primrose).